Here is a 299-residue protein sequence, read N- to C-terminus: Glycine--tRNA ligase alpha subunit (299 aa).

Belongs to the class-II aminoacyl-tRNA synthetase family. As to quaternary structure, tetramer of two alpha and two beta subunits.

Its subcellular location is the cytoplasm. It catalyses the reaction tRNA(Gly) + glycine + ATP = glycyl-tRNA(Gly) + AMP + diphosphate. This Desulforapulum autotrophicum (strain ATCC 43914 / DSM 3382 / VKM B-1955 / HRM2) (Desulfobacterium autotrophicum) protein is Glycine--tRNA ligase alpha subunit.